We begin with the raw amino-acid sequence, 118 residues long: Small ribosomal subunit protein uS13 (118 aa).

The interval 92 to 118 (RKGLPVRGQRTKTNARTRKGPRKPIRK) is disordered.

Belongs to the universal ribosomal protein uS13 family. As to quaternary structure, part of the 30S ribosomal subunit. Forms a loose heterodimer with protein S19. Forms two bridges to the 50S subunit in the 70S ribosome.

In terms of biological role, located at the top of the head of the 30S subunit, it contacts several helices of the 16S rRNA. In the 70S ribosome it contacts the 23S rRNA (bridge B1a) and protein L5 of the 50S subunit (bridge B1b), connecting the 2 subunits; these bridges are implicated in subunit movement. Contacts the tRNAs in the A and P-sites. In Pseudomonas putida (strain W619), this protein is Small ribosomal subunit protein uS13.